We begin with the raw amino-acid sequence, 108 residues long: Peptidyl-prolyl cis-trans isomerase FKBP1A (108 aa).

A PPIase FKBP-type domain is found at 20–108; that stretch reads GQTVVVHYVG…TFDVELLRLE (89 aa).

It belongs to the FKBP-type PPIase family. FKBP1 subfamily.

The protein resides in the cytoplasm. The catalysed reaction is [protein]-peptidylproline (omega=180) = [protein]-peptidylproline (omega=0). With respect to regulation, inhibited by both FK506 and rapamycin. Functionally, keeps in an inactive conformation TGFBR1, the TGF-beta type I serine/threonine kinase receptor, preventing TGF-beta receptor activation in absence of ligand. May modulate the RYR1 calcium channel activity. PPIases accelerate the folding of proteins. It catalyzes the cis-trans isomerization of proline imidic peptide bonds in oligopeptides. The chain is Peptidyl-prolyl cis-trans isomerase FKBP1A (fkbp1a) from Xenopus laevis (African clawed frog).